The sequence spans 483 residues: ATP-dependent RNA helicase dbp-5 (483 aa).

Residues 1-47 (MADLASRITKPDEAPAAAPEAAPVSAPASEEPKAPENETSIEESQSN) form a disordered region. Over residues 14–29 (APAAAPEAAPVSAPAS) the composition is skewed to low complexity. The Q motif signature appears at 74 to 102 (SSFDELGLPEAVNRGLLAINFKKPSKVQE). Positions 107–276 (LMLSDPPRNM…ERFAPNANQM (170 aa)) constitute a Helicase ATP-binding domain. 120–127 (SQSGTGKT) is a binding site for ATP. Residues 223 to 226 (DEAD) carry the DEAD box motif. Residues 304 to 455 (ILCKLYGLMT…LIQLNPNDLD (152 aa)) form the Helicase C-terminal domain.

The protein belongs to the DEAD box helicase family. DDX19/DBP5 subfamily. In terms of assembly, associates with the nuclear pore complex.

Its subcellular location is the cytoplasm. The protein localises to the nucleus. The protein resides in the nuclear pore complex. It is found in the nucleus membrane. The enzyme catalyses ATP + H2O = ADP + phosphate + H(+). Functionally, ATP-dependent RNA helicase associated with the nuclear pore complex and essential for mRNA export from the nucleus. May participate in a terminal step of mRNA export through the removal of proteins that accompany mRNA through the nucleopore complex. May also be involved in early transcription. The chain is ATP-dependent RNA helicase dbp-5 (dbp-5) from Neurospora crassa (strain ATCC 24698 / 74-OR23-1A / CBS 708.71 / DSM 1257 / FGSC 987).